The primary structure comprises 785 residues: Endonuclease MutS2 (785 aa).

334-341 contacts ATP; the sequence is GPNTGGKT. In terms of domain architecture, Smr spans 710–785; it reads LDLRGYNVED…GVGATIAELK (76 aa).

This sequence belongs to the DNA mismatch repair MutS family. MutS2 subfamily. In terms of assembly, homodimer. Binds to stalled ribosomes, contacting rRNA.

Its function is as follows. Endonuclease that is involved in the suppression of homologous recombination and thus may have a key role in the control of bacterial genetic diversity. In terms of biological role, acts as a ribosome collision sensor, splitting the ribosome into its 2 subunits. Detects stalled/collided 70S ribosomes which it binds and splits by an ATP-hydrolysis driven conformational change. Acts upstream of the ribosome quality control system (RQC), a ribosome-associated complex that mediates the extraction of incompletely synthesized nascent chains from stalled ribosomes and their subsequent degradation. Probably generates substrates for RQC. This chain is Endonuclease MutS2, found in Brevibacillus brevis (strain 47 / JCM 6285 / NBRC 100599).